The following is a 231-amino-acid chain: WAP four-disulfide core domain protein 3 (231 aa).

A signal peptide spans 1–24 (MMLSCLFLLKALLALGSLESWITA). WAP domains are found at residues 26–68 (EHAK…CRDI), 69–114 (PKGR…VVPI), 119–162 (LAEF…LGDI), and 163–207 (EGGR…VPPV). Disulfide bonds link Cys33–Cys57, Cys40–Cys61, Cys44–Cys56, Cys50–Cys65, Cys76–Cys102, Cys85–Cys106, Cys89–Cys101, Cys95–Cys110, Cys126–Cys150, Cys133–Cys154, Cys137–Cys149, Cys143–Cys158, Cys170–Cys195, Cys178–Cys199, Cys182–Cys194, and Cys188–Cys203. The N-linked (GlcNAc...) asparagine glycan is linked to Asn107. Residue Asn217 is glycosylated (N-linked (GlcNAc...) asparagine).

As to expression, ubiquitously expressed.

It is found in the secreted. In Homo sapiens (Human), this protein is WAP four-disulfide core domain protein 3 (WFDC3).